The primary structure comprises 69 residues: UPF0435 protein SH1076 (69 aa).

The protein belongs to the UPF0435 family.

The polypeptide is UPF0435 protein SH1076 (Staphylococcus haemolyticus (strain JCSC1435)).